The following is a 439-amino-acid chain: Packaging protein 1 (439 aa).

Positions 1–23 (MSTQIPARQETYDPSQSSGTKTP) are enriched in polar residues. A disordered region spans residues 1–42 (MSTQIPARQETYDPSQSSGTKTPSHPYDGNPTRSYPKRNAGK). 151–158 (GPTGSGKS) provides a ligand contact to ATP. The interval 419–439 (ERNPKLTDLEKLSPPGTFQET) is DNA-binding.

It belongs to the adenoviridae packaging protein 1 family. Homodimer. Part of a genome packaging complex composed of packaging proteins 1, 2 and 3; this complex specifically binds to the packaging sequence on the left end of viral genomic DNA and performs packaging of the viral genome. Interacts with protein 33K.

Its subcellular location is the virion. It localises to the host nucleus. The protein resides in the host nucleoplasm. It is found in the host nucleolus. In terms of biological role, component of the packaging machinery which encapsidates the viral DNA into preformed capsids and transcriptional activator of the viral major late promoter (MLP). Binds, along with packaging proteins 2 and 3, to the specific packaging sequence on the left end of viral genomic DNA and displays ATPase activity thereby providing the power stroke of the packaging machinery. The activity of packaging protein IVa2 is stimulated by protein 33K which acts as a terminase. May be the protein that pumps DNA into the capsid powered by ATP hydrolysis. Specifically binds to the 5'-CG-3' nucleotides of the repeats making up the packaging sequence. Component of the DEF-A and DEF-B transcription factors that bind downstream elements of the major late promoter (MLP), and stimulate transcription from the MLP after initiation of viral DNA replication. DEF-A is a heterodimer packaging proteins 1 and 2 and DEF-B is a homodimer of packaging protein 1. The polypeptide is Packaging protein 1 (Fowl adenovirus A serotype 1 (strain CELO / Phelps) (FAdV-1)).